The chain runs to 159 residues: Large ribosomal subunit protein uL22 (159 aa).

The protein belongs to the universal ribosomal protein uL22 family. As to quaternary structure, part of the 50S ribosomal subunit.

In terms of biological role, this protein binds specifically to 23S rRNA; its binding is stimulated by other ribosomal proteins, e.g. L4, L17, and L20. It is important during the early stages of 50S assembly. It makes multiple contacts with different domains of the 23S rRNA in the assembled 50S subunit and ribosome. Its function is as follows. The globular domain of the protein is located near the polypeptide exit tunnel on the outside of the subunit, while an extended beta-hairpin is found that lines the wall of the exit tunnel in the center of the 70S ribosome. This Thermotoga sp. (strain RQ2) protein is Large ribosomal subunit protein uL22.